The chain runs to 507 residues: CWF19-like protein DRN1 (507 aa).

The residue at position 242 (Ser-242) is a Phosphoserine.

It belongs to the CWF19 family. As to quaternary structure, interacts with DBR1. Interacts with SYF1, a component of the NTC complex. Interacts with lariat-introns and lariat-intermediates.

Its subcellular location is the nucleus. The protein localises to the cytoplasm. Its function is as follows. Involved in branched RNA metabolism, modulating the turnover of lariat-intron pre-mRNAs by the lariat-debranching enzyme DBR1. Enhances the debranching activity of DBR1 in vitro. In Saccharomyces cerevisiae (strain ATCC 204508 / S288c) (Baker's yeast), this protein is CWF19-like protein DRN1 (DRN1).